The following is a 688-amino-acid chain: Glycine--tRNA ligase beta subunit (688 aa).

It belongs to the class-II aminoacyl-tRNA synthetase family. In terms of assembly, tetramer of two alpha and two beta subunits.

The protein localises to the cytoplasm. The catalysed reaction is tRNA(Gly) + glycine + ATP = glycyl-tRNA(Gly) + AMP + diphosphate. The protein is Glycine--tRNA ligase beta subunit of Syntrophotalea carbinolica (strain DSM 2380 / NBRC 103641 / GraBd1) (Pelobacter carbinolicus).